Reading from the N-terminus, the 371-residue chain is Putative glutamate--cysteine ligase 2 (371 aa).

Belongs to the glutamate--cysteine ligase type 2 family. YbdK subfamily.

The enzyme catalyses L-cysteine + L-glutamate + ATP = gamma-L-glutamyl-L-cysteine + ADP + phosphate + H(+). ATP-dependent carboxylate-amine ligase which exhibits weak glutamate--cysteine ligase activity. This Cupriavidus pinatubonensis (strain JMP 134 / LMG 1197) (Cupriavidus necator (strain JMP 134)) protein is Putative glutamate--cysteine ligase 2.